A 141-amino-acid polypeptide reads, in one-letter code: Hemoglobin subunit alpha-A/A' (141 aa).

Positions 1–141 constitute a Globin domain; the sequence is VLSANDKTNV…VGNVLTAKYR (141 aa). An O2-binding site is contributed by His-58. His-87 provides a ligand contact to heme b.

It belongs to the globin family. As to quaternary structure, heterotetramer of two alpha chains and two beta chains. Red blood cells.

Involved in oxygen transport from the lung to the various peripheral tissues. The sequence is that of Hemoglobin subunit alpha-A/A' (HBAA) from Gyps rueppelli (Rueppell's griffon).